The sequence spans 191 residues: dCTP deaminase (191 aa).

Residues 112–117 (KSTYAR), 136–138 (TLE), Gln157, Tyr173, and Gln183 contribute to the dCTP site. Residue Glu138 is the Proton donor/acceptor of the active site.

It belongs to the dCTP deaminase family. As to quaternary structure, homotrimer.

The enzyme catalyses dCTP + H2O + H(+) = dUTP + NH4(+). It participates in pyrimidine metabolism; dUMP biosynthesis; dUMP from dCTP (dUTP route): step 1/2. In terms of biological role, catalyzes the deamination of dCTP to dUTP. In Psychrobacter cryohalolentis (strain ATCC BAA-1226 / DSM 17306 / VKM B-2378 / K5), this protein is dCTP deaminase.